Here is a 227-residue protein sequence, read N- to C-terminus: Cytochrome c oxidase subunit 2 (227 aa).

The Mitochondrial intermembrane segment spans residues 1 to 14; it reads MAYPFQLGLQDATS. The helical transmembrane segment at 15-45 threads the bilayer; that stretch reads PIMEELMNFHDHTLMIVFLISSLVLYIISLM. Residues 46–59 are Mitochondrial matrix-facing; sequence LTTKLTHTSTMDAQ. Residues 60–87 form a helical membrane-spanning segment; it reads EVETIWTILPAAILILIALPSLRILYMM. Residues 88 to 227 are Mitochondrial intermembrane-facing; sequence DEINNPALTV…YFENWSASMI (140 aa). Residues His-161, Cys-196, Glu-198, Cys-200, His-204, and Met-207 each coordinate Cu cation. Glu-198 lines the Mg(2+) pocket. The residue at position 218 (Tyr-218) is a Phosphotyrosine.

The protein belongs to the cytochrome c oxidase subunit 2 family. Component of the cytochrome c oxidase (complex IV, CIV), a multisubunit enzyme composed of 14 subunits. The complex is composed of a catalytic core of 3 subunits MT-CO1, MT-CO2 and MT-CO3, encoded in the mitochondrial DNA, and 11 supernumerary subunits COX4I, COX5A, COX5B, COX6A, COX6B, COX6C, COX7A, COX7B, COX7C, COX8 and NDUFA4, which are encoded in the nuclear genome. The complex exists as a monomer or a dimer and forms supercomplexes (SCs) in the inner mitochondrial membrane with NADH-ubiquinone oxidoreductase (complex I, CI) and ubiquinol-cytochrome c oxidoreductase (cytochrome b-c1 complex, complex III, CIII), resulting in different assemblies (supercomplex SCI(1)III(2)IV(1) and megacomplex MCI(2)III(2)IV(2)). Found in a complex with TMEM177, COA6, COX18, COX20, SCO1 and SCO2. Interacts with TMEM177 in a COX20-dependent manner. Interacts with COX20. Interacts with COX16. Cu cation serves as cofactor.

The protein localises to the mitochondrion inner membrane. The catalysed reaction is 4 Fe(II)-[cytochrome c] + O2 + 8 H(+)(in) = 4 Fe(III)-[cytochrome c] + 2 H2O + 4 H(+)(out). Functionally, component of the cytochrome c oxidase, the last enzyme in the mitochondrial electron transport chain which drives oxidative phosphorylation. The respiratory chain contains 3 multisubunit complexes succinate dehydrogenase (complex II, CII), ubiquinol-cytochrome c oxidoreductase (cytochrome b-c1 complex, complex III, CIII) and cytochrome c oxidase (complex IV, CIV), that cooperate to transfer electrons derived from NADH and succinate to molecular oxygen, creating an electrochemical gradient over the inner membrane that drives transmembrane transport and the ATP synthase. Cytochrome c oxidase is the component of the respiratory chain that catalyzes the reduction of oxygen to water. Electrons originating from reduced cytochrome c in the intermembrane space (IMS) are transferred via the dinuclear copper A center (CU(A)) of subunit 2 and heme A of subunit 1 to the active site in subunit 1, a binuclear center (BNC) formed by heme A3 and copper B (CU(B)). The BNC reduces molecular oxygen to 2 water molecules using 4 electrons from cytochrome c in the IMS and 4 protons from the mitochondrial matrix. The protein is Cytochrome c oxidase subunit 2 (MT-CO2) of Lemniscomys barbarus (Barbary striped grass mouse).